A 344-amino-acid chain; its full sequence is tRNA N6-adenosine threonylcarbamoyltransferase (344 aa).

Residues His110 and His114 each coordinate Fe cation. Residues 132–136, Asp166, Gly179, Asp183, and Asn278 each bind substrate; that span reads LVSGG. Asp306 contributes to the Fe cation binding site.

It belongs to the KAE1 / TsaD family. It depends on Fe(2+) as a cofactor.

The protein resides in the cytoplasm. The catalysed reaction is L-threonylcarbamoyladenylate + adenosine(37) in tRNA = N(6)-L-threonylcarbamoyladenosine(37) in tRNA + AMP + H(+). Its function is as follows. Required for the formation of a threonylcarbamoyl group on adenosine at position 37 (t(6)A37) in tRNAs that read codons beginning with adenine. Is involved in the transfer of the threonylcarbamoyl moiety of threonylcarbamoyl-AMP (TC-AMP) to the N6 group of A37, together with TsaE and TsaB. TsaD likely plays a direct catalytic role in this reaction. The sequence is that of tRNA N6-adenosine threonylcarbamoyltransferase from Nocardia farcinica (strain IFM 10152).